Here is a 378-residue protein sequence, read N- to C-terminus: Uroporphyrinogen decarboxylase (378 aa).

Substrate contacts are provided by residues Arg-40–Arg-44, Asp-90, Tyr-167, Ser-222, and His-355.

It belongs to the uroporphyrinogen decarboxylase family. In terms of assembly, homodimer.

It is found in the cytoplasm. The enzyme catalyses uroporphyrinogen III + 4 H(+) = coproporphyrinogen III + 4 CO2. The protein operates within porphyrin-containing compound metabolism; protoporphyrin-IX biosynthesis; coproporphyrinogen-III from 5-aminolevulinate: step 4/4. Catalyzes the decarboxylation of four acetate groups of uroporphyrinogen-III to yield coproporphyrinogen-III. The chain is Uroporphyrinogen decarboxylase from Psychrobacter arcticus (strain DSM 17307 / VKM B-2377 / 273-4).